Here is a 495-residue protein sequence, read N- to C-terminus: Glutamyl-tRNA(Gln) amidotransferase subunit A (495 aa).

Catalysis depends on charge relay system residues K75 and S150. Catalysis depends on S174, which acts as the Acyl-ester intermediate.

It belongs to the amidase family. GatA subfamily. In terms of assembly, heterotrimer of A, B and C subunits.

The enzyme catalyses L-glutamyl-tRNA(Gln) + L-glutamine + ATP + H2O = L-glutaminyl-tRNA(Gln) + L-glutamate + ADP + phosphate + H(+). In terms of biological role, allows the formation of correctly charged Gln-tRNA(Gln) through the transamidation of misacylated Glu-tRNA(Gln) in organisms which lack glutaminyl-tRNA synthetase. The reaction takes place in the presence of glutamine and ATP through an activated gamma-phospho-Glu-tRNA(Gln). The protein is Glutamyl-tRNA(Gln) amidotransferase subunit A of Paraburkholderia xenovorans (strain LB400).